The following is a 456-amino-acid chain: MFS-type transporter ppzB (456 aa).

Transmembrane regions (helical) follow at residues 1–21, 38–58, 72–92, 125–145, and 154–174; these read MGLF…PFIM, GFLA…GWAA, VFLF…LLVV, IGTI…LGGV, and AVFA…GLVI. The tract at residues 206 to 225 is disordered; that stretch reads EAQERTHEGTPLLPQDDDDD. The next 6 membrane-spanning stretches (helical) occupy residues 255 to 275, 284 to 304, 318 to 338, 348 to 368, 398 to 418, and 427 to 447; these read LAML…ATVP, FSSL…FALG, AAAT…GLPE, VALF…VTSP, FGFS…LGGV, and VMGA…FLFV.

This sequence belongs to the major facilitator superfamily. TCR/Tet family.

Its subcellular location is the membrane. Its function is as follows. MFS-type transporter; part of the gene cluster that mediates the biosynthesis of pyrrolopyrazines, secondary metabolites showing insecticidal activity. Probably involved in the secretion of peramine and other pyrrolopyrazines. This is MFS-type transporter ppzB (ppzB) from Metarhizium majus (strain ARSEF 297).